The chain runs to 238 residues: Orotidine 5'-phosphate decarboxylase (238 aa).

Residues Asp10, Lys32, 59 to 68 (DLKLHDIPNT), Thr122, Arg184, Gln193, Gly213, and Arg214 contribute to the substrate site. Lys61 acts as the Proton donor in catalysis.

It belongs to the OMP decarboxylase family. Type 1 subfamily. Homodimer.

The catalysed reaction is orotidine 5'-phosphate + H(+) = UMP + CO2. It participates in pyrimidine metabolism; UMP biosynthesis via de novo pathway; UMP from orotate: step 2/2. Functionally, catalyzes the decarboxylation of orotidine 5'-monophosphate (OMP) to uridine 5'-monophosphate (UMP). This chain is Orotidine 5'-phosphate decarboxylase, found in Bacillus cereus (strain Q1).